Consider the following 330-residue polypeptide: Methylthioribose-1-phosphate isomerase (330 aa).

Substrate contacts are provided by residues 49–51 (RGA), Arg-83, and Gln-179. The active-site Proton donor is Asp-220. Position 230–231 (230–231 (NK)) interacts with substrate.

It belongs to the eIF-2B alpha/beta/delta subunits family. MtnA subfamily.

It carries out the reaction 5-(methylsulfanyl)-alpha-D-ribose 1-phosphate = 5-(methylsulfanyl)-D-ribulose 1-phosphate. The protein operates within amino-acid biosynthesis; L-methionine biosynthesis via salvage pathway; L-methionine from S-methyl-5-thio-alpha-D-ribose 1-phosphate: step 1/6. Functionally, catalyzes the interconversion of methylthioribose-1-phosphate (MTR-1-P) into methylthioribulose-1-phosphate (MTRu-1-P). The polypeptide is Methylthioribose-1-phosphate isomerase (Thermus thermophilus (strain ATCC 27634 / DSM 579 / HB8)).